A 1192-amino-acid polypeptide reads, in one-letter code: Chromosome partition protein Smc (1192 aa).

31–38 contributes to the ATP binding site; it reads PNGSGKSN. Coiled-coil stretches lie at residues 164 to 197, 234 to 292, 333 to 369, and 396 to 464; these read AGIS…VDEV, LTLS…RSEL, SAIA…RDVE, and EHEA…DAKV. One can recognise an SMC hinge domain in the interval 522 to 636; it reads KDLVGIVADC…LVDTLATAIG (115 aa). Coiled-coil stretches lie at residues 676 to 736, 772 to 902, and 986 to 1030; these read RSEL…AKLH, ELAV…EREA, and GSVN…INAD.

It belongs to the SMC family. In terms of assembly, homodimer.

The protein localises to the cytoplasm. Required for chromosome condensation and partitioning. The sequence is that of Chromosome partition protein Smc from Rhodopirellula baltica (strain DSM 10527 / NCIMB 13988 / SH1).